The sequence spans 179 residues: SCAN domain-containing protein 1 (179 aa).

Positions 1 to 108 are disordered; the sequence is MAATEPILAA…GSRLGPETFR (108 aa). The span at 60–80 shows a compositional bias: low complexity; that stretch reads AIPTPQAAASAAPELPLGPAP. Residues 108–166 enclose the SCAN box domain; the sequence is RQRFRQFRYQDAAGPREAFRQLRELSRQWLRPDIRTKEQIVEMLVQEQLLAILPEAARA.

In terms of assembly, interacts with ZNF202.

The protein localises to the nucleus. May regulate transcriptional activity. The chain is SCAN domain-containing protein 1 (SCAND1) from Pongo pygmaeus (Bornean orangutan).